Reading from the N-terminus, the 97-residue chain is High mobility group protein homolog NHP1 (97 aa).

Positions 1 to 24 (MAGASDRTGVRRPRKAKKDPNAPK) are disordered. The HMG box DNA-binding region spans 23 to 93 (PKRALSSYMF…RYEREKAEYA (71 aa)).

It localises to the nucleus. This is High mobility group protein homolog NHP1 from Babesia bovis.